A 385-amino-acid chain; its full sequence is 28S rRNA (uridine-N(3))-methyltransferase (385 aa).

Disordered stretches follow at residues 1–35 (MAERPRKRPCGPGEHGQRVEWRKWKQQKKEEKKKW) and 47–72 (QRAQEEEAKRQEEEEEAAAQRSNQGR). Composition is skewed to basic and acidic residues over residues 15–35 (HGQRVEWRKWKQQKKEEKKKW) and 47–58 (QRAQEEEAKRQE). S-adenosyl-L-methionine-binding residues include arginine 293, glycine 313, asparagine 342, and threonine 343.

The protein belongs to the class IV-like SAM-binding methyltransferase superfamily. As to quaternary structure, interacts with INCA1.

It localises to the cytoplasm. The protein resides in the cytoskeleton. The protein localises to the spindle. It is found in the chromosome. Its subcellular location is the centromere. It localises to the kinetochore. The protein resides in the microtubule organizing center. The protein localises to the centrosome. The catalysed reaction is uridine in 28S rRNA + S-adenosyl-L-methionine = N(3)-methyluridine in 28S rRNA + S-adenosyl-L-homocysteine + H(+). Functionally, S-adenosyl-L-methionine-dependent methyltransferase that specifically methylates the N3 position of a uridine in 28S rRNA. Required for association of the centrosomes with the poles of the bipolar mitotic spindle during metaphase. Also involved in chromosome alignment. May promote centrosome maturation probably by recruiting A-kinase anchor protein AKAP9 to centrosomes in early mitosis. Binds specifically to miRNA MIR145 hairpin, regulates MIR145 expression at a postranscriptional level. The chain is 28S rRNA (uridine-N(3))-methyltransferase from Mus musculus (Mouse).